The primary structure comprises 251 residues: Imidazole glycerol phosphate synthase subunit HisF (251 aa).

Residues Asp-11 and Asp-130 contribute to the active site.

The protein belongs to the HisA/HisF family. Heterodimer of HisH and HisF.

Its subcellular location is the cytoplasm. It carries out the reaction 5-[(5-phospho-1-deoxy-D-ribulos-1-ylimino)methylamino]-1-(5-phospho-beta-D-ribosyl)imidazole-4-carboxamide + L-glutamine = D-erythro-1-(imidazol-4-yl)glycerol 3-phosphate + 5-amino-1-(5-phospho-beta-D-ribosyl)imidazole-4-carboxamide + L-glutamate + H(+). Its pathway is amino-acid biosynthesis; L-histidine biosynthesis; L-histidine from 5-phospho-alpha-D-ribose 1-diphosphate: step 5/9. IGPS catalyzes the conversion of PRFAR and glutamine to IGP, AICAR and glutamate. The HisF subunit catalyzes the cyclization activity that produces IGP and AICAR from PRFAR using the ammonia provided by the HisH subunit. The protein is Imidazole glycerol phosphate synthase subunit HisF of Chlorobium phaeobacteroides (strain DSM 266 / SMG 266 / 2430).